An 89-amino-acid chain; its full sequence is Putative regulatory protein MAE_11840 (89 aa).

The protein belongs to the RemA family.

In Microcystis aeruginosa (strain NIES-843 / IAM M-2473), this protein is Putative regulatory protein MAE_11840.